A 191-amino-acid polypeptide reads, in one-letter code: Peptidyl-tRNA hydrolase (191 aa).

Residue tyrosine 14 participates in tRNA binding. The active-site Proton acceptor is the histidine 19. TRNA is bound by residues tyrosine 64, asparagine 66, and asparagine 112.

Belongs to the PTH family. In terms of assembly, monomer.

It is found in the cytoplasm. It catalyses the reaction an N-acyl-L-alpha-aminoacyl-tRNA + H2O = an N-acyl-L-amino acid + a tRNA + H(+). Functionally, hydrolyzes ribosome-free peptidyl-tRNAs (with 1 or more amino acids incorporated), which drop off the ribosome during protein synthesis, or as a result of ribosome stalling. Catalyzes the release of premature peptidyl moieties from peptidyl-tRNA molecules trapped in stalled 50S ribosomal subunits, and thus maintains levels of free tRNAs and 50S ribosomes. In Clostridium botulinum (strain Alaska E43 / Type E3), this protein is Peptidyl-tRNA hydrolase.